We begin with the raw amino-acid sequence, 1065 residues long: DNA ligase 4 (1065 aa).

The disordered stretch occupies residues 1–20 (MAVHAPYNHAPPPTQEINGQ). ATP contacts are provided by E295, K297, L298, R302, E357, F387, E452, K457, K474, and K476. Catalysis depends on K297, which acts as the N6-AMP-lysine intermediate. E357 contacts Mg(2+). Position 452 (E452) interacts with Mg(2+). Positions 696 to 775 (VETSIFSDMT…TALPFLKEFL (80 aa)) constitute a BRCT 1 domain. A disordered region spans residues 825 to 928 (GEDKDEIDVE…SDVGVNGDDY (104 aa)). 2 stretches are compositionally biased toward basic and acidic residues: residues 834-864 (EESR…KKLQ) and 886-900 (MSLK…ERSR). The BRCT 2 domain occupies 954-1064 (DEDRIFYHLA…TLLDEDLYKP (111 aa)).

It belongs to the ATP-dependent DNA ligase family. Mg(2+) serves as cofactor.

The protein localises to the nucleus. It carries out the reaction ATP + (deoxyribonucleotide)n-3'-hydroxyl + 5'-phospho-(deoxyribonucleotide)m = (deoxyribonucleotide)n+m + AMP + diphosphate.. Its function is as follows. DNA ligase involved in DNA non-homologous end joining (NHEJ); required for double-strand break (DSB) repair. The sequence is that of DNA ligase 4 (LIG4) from Cryptococcus neoformans var. neoformans serotype D (strain B-3501A) (Filobasidiella neoformans).